The following is a 492-amino-acid chain: 3,6-anhydro-alpha-L-galactose dehydrogenase (492 aa).

Residues 160 to 161 (WN), 184 to 187 (KPSE), and 237 to 238 (GS) each bind NADP(+). Glu259 (proton acceptor) is an active-site residue. Leu260 contacts NADP(+). The active-site Nucleophile is Cys293. Glu394 lines the NADP(+) pocket.

The protein belongs to the aldehyde dehydrogenase family.

It carries out the reaction 3,6-anhydro-alpha-L-galactopyranose + NADP(+) + H2O = 3,6-anhydro-L-galactonate + NADPH + 2 H(+). Significantly inhibited by EDTA. Activity is enhanced by Fe(2+), but is strongly inhibited by Mn(2+), Cu(2+), Zn(2+), Ni(2+) and Co(2+). In terms of biological role, involved in the degradation of 3,6-anhydro-L-galactose, which is the major monomeric sugar of red macroalgae. Catalyzes the oxidation of 3,6-anhydro-L-galactose (AHG) to form 3,6-anhydrogalactonate (AHGA). Shows broad substrate specificity, with maximum activity toward AHG. The enzyme activities toward D-fructose, D-galactose and D-ribose are between 40% and 50% of the maximum, but those toward L-rhamnose, L-glyceraldehyde, D-glyceraldehyde, L-fucose and D-glucose are much lower. The polypeptide is 3,6-anhydro-alpha-L-galactose dehydrogenase (Streptomyces coelicolor (strain ATCC BAA-471 / A3(2) / M145)).